The sequence spans 43 residues: Photosystem I reaction center subunit IX (43 aa).

The helical transmembrane segment at 7–27 threads the bilayer; the sequence is YLSTAPVLSTIWFGSLAGLLI.

This sequence belongs to the PsaJ family.

The protein localises to the plastid. Its subcellular location is the chloroplast thylakoid membrane. In terms of biological role, may help in the organization of the PsaE and PsaF subunits. This Vitis vinifera (Grape) protein is Photosystem I reaction center subunit IX.